A 752-amino-acid chain; its full sequence is Mitochondrial Rho GTPase 1 (752 aa).

At 1–671 (MRKDVRIVLA…RNALSYGTNR (671 aa)) the chain is on the cytoplasmic side. One can recognise a Miro 1 domain in the interval 2–170 (RKDVRIVLAG…FYFAQKAVLY (169 aa)). Residues 11 to 18 (GDPDVGKS), 57 to 61 (DTSSS), and 115 to 118 (NKID) each bind GTP. EF-hand domains lie at 186–221 (ACVD…CFDT) and 333–368 (NGYQ…APDN). Asp-199, Asp-201, Asp-203, Glu-210, Asp-346, Asp-348, Asp-350, and Glu-357 together coordinate Ca(2+). A disordered region spans residues 426–460 (SSGSASTPAPIPLTPTGPPGSRPSRNRTPCPPSTI). Residues 434–446 (APIPLTPTGPPGS) show a composition bias toward pro residues. The Miro 2 domain maps to 481–651 (RSVFLGFVLG…YGLICTIAVD (171 aa)). GTP-binding positions include 490 to 497 (GAAGSGKT), 526 to 530 (EQAGA), and 595 to 598 (TKAD). A helical; Anchor for type IV membrane protein transmembrane segment spans residues 672–692 (WQFWGYIGLVVIGGGGAVWIC). The Mitochondrial intermembrane portion of the chain corresponds to 693–752 (AKVLKVPIGSTLGFGSSASTTSWWLSGAQARGAGGPNATKVSSWFDWIRWQSSSNVRSEL).

The protein belongs to the mitochondrial Rho GTPase family.

The protein resides in the mitochondrion outer membrane. Its function is as follows. Mitochondrial GTPase involved in mitochondrial trafficking. Probably involved in control of anterograde transport of mitochondria and their subcellular distribution. This Mycosarcoma maydis (Corn smut fungus) protein is Mitochondrial Rho GTPase 1 (GEM1).